An 801-amino-acid polypeptide reads, in one-letter code: Mitochondrial intermediate peptidase (801 aa).

Residues 1 to 41 (MKDQLLVPLRRRPWTCQKCLQRLQLPRHQTRRSFETAASPF) constitute a mitochondrion transit peptide. His564 is a Zn(2+) binding site. Residue Glu565 is part of the active site. Residues His568 and His571 each coordinate Zn(2+).

This sequence belongs to the peptidase M3 family. It depends on Zn(2+) as a cofactor.

It localises to the mitochondrion matrix. It catalyses the reaction Release of an N-terminal octapeptide as second stage of processing of some proteins imported into the mitochondrion.. Cleaves proteins, imported into the mitochondrion, to their mature size. While most mitochondrial precursor proteins are processed to the mature form in one step by mitochondrial processing peptidase (MPP), the sequential cleavage by MIP of an octapeptide after initial processing by MPP is a required step for a subgroup of nuclear-encoded precursor proteins destined for the matrix or the inner membrane. This Aspergillus fumigatus (strain CBS 144.89 / FGSC A1163 / CEA10) (Neosartorya fumigata) protein is Mitochondrial intermediate peptidase (oct1).